The following is a 228-amino-acid chain: MTARRAPAVNRDVLEQMLVDGTAALDIALTDAQRNQLLDYVALLGKWNAVYNLTAIRDPKQMLIQHILDSLSIVPHLRDRASARVLDVGSGGGLPGIVLAIVRPDWQVTLNDIVQKKSAFQTQMRAELKLANLSVVTGRVELLQPGVDVPEKFDMIVSRAFADLSDFVKLARHLVAPGGSIWAMKGVHPDDEIARLPEGSRVKQTMRLAVPMLDAERHLIEVIVDEAN.

S-adenosyl-L-methionine is bound by residues G89, L94, 140-141 (VE), and R159.

It belongs to the methyltransferase superfamily. RNA methyltransferase RsmG family.

It is found in the cytoplasm. The catalysed reaction is guanosine(527) in 16S rRNA + S-adenosyl-L-methionine = N(7)-methylguanosine(527) in 16S rRNA + S-adenosyl-L-homocysteine. In terms of biological role, specifically methylates the N7 position of guanine in position 527 of 16S rRNA. The sequence is that of Ribosomal RNA small subunit methyltransferase G from Burkholderia ambifaria (strain ATCC BAA-244 / DSM 16087 / CCUG 44356 / LMG 19182 / AMMD) (Burkholderia cepacia (strain AMMD)).